The sequence spans 195 residues: Molybdenum cofactor guanylyltransferase (195 aa).

GTP contacts are provided by residues 10–12 (LAG), Lys23, Asn51, Asp69, and Asp99. Asp99 serves as a coordination point for Mg(2+).

The protein belongs to the MobA family. As to quaternary structure, monomer. Requires Mg(2+) as cofactor.

The protein resides in the cytoplasm. It carries out the reaction Mo-molybdopterin + GTP + H(+) = Mo-molybdopterin guanine dinucleotide + diphosphate. Functionally, transfers a GMP moiety from GTP to Mo-molybdopterin (Mo-MPT) cofactor (Moco or molybdenum cofactor) to form Mo-molybdopterin guanine dinucleotide (Mo-MGD) cofactor. This is Molybdenum cofactor guanylyltransferase from Shewanella putrefaciens (strain CN-32 / ATCC BAA-453).